The primary structure comprises 730 residues: Nitrogen fixation protein FixI (730 aa).

Residues 1–101 are Cytoplasmic-facing; that stretch reads MHVTRDFSHY…AEVAEVAESR (101 aa). The 67-residue stretch at 19–85 folds into the HMA domain; sequence KHIDLAVEGV…RLEELGYKAY (67 aa). A metal cation contacts are provided by C30 and C33. Residues 102-123 traverse the membrane as a helical segment; the sequence is FLLRCLGVAAFATMNVMMLSIP. At 124 to 138 the chain is on the extracellular side; sequence VWSGNVSDMLPEQRD. A helical transmembrane segment spans residues 139 to 162; sequence FFHWLSALIALPAAAYAGQPFFRS. At 163–168 the chain is on the cytoplasmic side; the sequence is AWRALS. Residues 169-190 traverse the membrane as a helical segment; the sequence is AKTTNMDVPISIGVILALGMSV. At 191-202 the chain is on the extracellular side; it reads VETIHHAEHAYF. The helical transmembrane segment at 203-223 threads the bilayer; the sequence is DAAIMLLTFLLVGRFLDQNMR. At 224–352 the chain is on the cytoplasmic side; it reads RRTRAVAGNL…RSRYMRLADR (129 aa). Residues 353 to 375 form a helical membrane-spanning segment; it reads ASRLYAPVVHATALITILGWVIA. Topologically, residues 376-382 are extracellular; the sequence is GASWHDA. The helical transmembrane segment at 383–400 threads the bilayer; sequence IVTGVAVLIITCPCALGL. Residues 401–676 lie on the Cytoplasmic side of the membrane; sequence AIPTVQTVAS…DSARKALHLM (276 aa). D438 functions as the 4-aspartylphosphate intermediate in the catalytic mechanism. Residues D622 and D626 each contribute to the Mg(2+) site. A helical transmembrane segment spans residues 677 to 696; the sequence is RQNLWLAIGYNVLAVPVAIS. Residues 697-701 lie on the Extracellular side of the membrane; it reads GVVTP. The chain crosses the membrane as a helical span at residues 702 to 720; that stretch reads LIAAAAMSGSSILVMLNSL. Topologically, residues 721–730 are cytoplasmic; sequence RARSDSREIV.

The protein belongs to the cation transport ATPase (P-type) (TC 3.A.3) family. Type IB subfamily.

The protein resides in the cell membrane. It carries out the reaction ATP + H2O = ADP + phosphate + H(+). In terms of biological role, fixI is a pump of a specific cation involved in symbiotic nitrogen fixation. The four proteins FixG, FixH, FixI, and FixS may participate in a membrane-bound complex coupling the FixI cation pump with a redox process catalyzed by FixG. The polypeptide is Nitrogen fixation protein FixI (fixI) (Bradyrhizobium diazoefficiens (strain JCM 10833 / BCRC 13528 / IAM 13628 / NBRC 14792 / USDA 110)).